The following is a 307-amino-acid chain: Taste receptor type 2 member 106 (307 aa).

The Extracellular segment spans residues 1–7 (MLTIPEG). Residues 8-28 (ILLCFITSGSVLGVLGNGFIL) form a helical membrane-spanning segment. The Cytoplasmic segment spans residues 29–41 (HVNCTDCVRQKFS). The helical transmembrane segment at 42–62 (TTGFIFTGLAISRICVICIII) threads the bilayer. The Extracellular segment spans residues 63–81 (SDGYLKLFSPHMVASDAHI). The helical transmembrane segment at 82–104 (IGISYLWIITNHTSTCFATILNL) threads the bilayer. The Cytoplasmic segment spans residues 105–124 (FYFLKIANFSHYIFFCLKRK). A helical transmembrane segment spans residues 125–145 (LNTIFIFLLGCLFISWSVAFP). Residues 146–179 (QTVKIFNDKMKHRNTSWKFHLHKSKFIINHILLN) lie on the Extracellular side of the membrane. N-linked (GlcNAc...) asparagine glycosylation is present at Asn159. The chain crosses the membrane as a helical span at residues 180–200 (LGVIFFCMVAIITSFLLIISL). Over 201 to 227 (WKHNRKMQLYVSRFKSLNTEVHLKVMK) the chain is Cytoplasmic. A helical transmembrane segment spans residues 228–248 (VLISFIILLILHVIGILIETL). The Extracellular portion of the chain corresponds to 249 to 257 (SFLRYENKL). Residues 258–278 (LLILGLNFSSMYPCCHSFILI) form a helical membrane-spanning segment. Residues 279-307 (LANNQLKQASLKALKQFKCHKKDKDVRET) lie on the Cytoplasmic side of the membrane.

The protein belongs to the G-protein coupled receptor T2R family.

The protein localises to the membrane. Putative taste receptor which may play a role in the perception of bitterness. The protein is Taste receptor type 2 member 106 of Rattus norvegicus (Rat).